A 40-amino-acid polypeptide reads, in one-letter code: Peroxisomal LYS1 stabilizing protein 1 (40 aa).

A compositionally biased stretch (polar residues) spans 1–10; sequence MTAKTKQSWN. Residues 1–20 are disordered; that stretch reads MTAKTKQSWNKGIWENGKQG.

It is found in the cytoplasm. Its subcellular location is the cytosol. It localises to the peroxisome matrix. Modulates the lysine biosynthesis pathway, possibly by stabilizing the lysine biosynthesis LYS1 protein in lysine-deplete conditions. This is Peroxisomal LYS1 stabilizing protein 1 from Saccharomyces cerevisiae (strain ATCC 204508 / S288c) (Baker's yeast).